The sequence spans 175 residues: MDWMPLVLAAEEAESRGFSLNLNLLETNIINIAIVFGLLIFLARGYFGRVLGERKSEIENGIREVENRGRQAEQELATARQNLSQAQVQAQQILASARTNAERVRAQVLDQAQIDIARVRETVDQDLRNEQQRILTQVRLKVVGDALARLRERLPGELDEATQRRLLDRSIQLLD.

A helical membrane pass occupies residues 22-42 (LNLLETNIINIAIVFGLLIFL).

The protein belongs to the ATPase B chain family. As to quaternary structure, F-type ATPases have 2 components, F(1) - the catalytic core - and F(0) - the membrane proton channel. F(1) has five subunits: alpha(3), beta(3), gamma(1), delta(1), epsilon(1). F(0) has four main subunits: a(1), b(1), b'(1) and c(10-14). The alpha and beta chains form an alternating ring which encloses part of the gamma chain. F(1) is attached to F(0) by a central stalk formed by the gamma and epsilon chains, while a peripheral stalk is formed by the delta, b and b' chains.

The protein localises to the cell inner membrane. Its function is as follows. F(1)F(0) ATP synthase produces ATP from ADP in the presence of a proton or sodium gradient. F-type ATPases consist of two structural domains, F(1) containing the extramembraneous catalytic core and F(0) containing the membrane proton channel, linked together by a central stalk and a peripheral stalk. During catalysis, ATP synthesis in the catalytic domain of F(1) is coupled via a rotary mechanism of the central stalk subunits to proton translocation. Component of the F(0) channel, it forms part of the peripheral stalk, linking F(1) to F(0). This Gloeobacter violaceus (strain ATCC 29082 / PCC 7421) protein is ATP synthase subunit b.